A 207-amino-acid polypeptide reads, in one-letter code: MGMLEVRELLCERDERTLFSGLSFTLNAGEWVQITGSNGAGKTMLLRLLTGLSRPDAGEVLWQGQPLHQVRDSYHQNLLWIGHQPGIKTRLTALENLHFYHRDGDTAQCLEALAQAGLAGFEDIPVNQLSAGQQRRVALARLWLTRATLWILDEPFTAIDVNGVDRLTQRMAQHTEQGGIVILTTHQPLNVAESKIRRISLTQTRAV.

The ABC transporter domain maps to L4–V207. An ATP-binding site is contributed by G36–T43.

The protein belongs to the ABC transporter superfamily. CcmA exporter (TC 3.A.1.107) family. In terms of assembly, the complex is composed of two ATP-binding proteins (CcmA) and two transmembrane proteins (CcmB).

Its subcellular location is the cell inner membrane. It catalyses the reaction heme b(in) + ATP + H2O = heme b(out) + ADP + phosphate + H(+). In terms of biological role, part of the ABC transporter complex CcmAB involved in the biogenesis of c-type cytochromes; once thought to export heme, this seems not to be the case, but its exact role is uncertain. Responsible for energy coupling to the transport system. This Shigella dysenteriae serotype 1 (strain Sd197) protein is Cytochrome c biogenesis ATP-binding export protein CcmA.